The chain runs to 479 residues: Anaerobic nitric oxide reductase flavorubredoxin (479 aa).

Residues 30–210 (LRGSSYNSYL…PFSRLVTPKI (181 aa)) form a zinc metallo-hydrolase region. Fe cation-binding residues include His79, Glu81, Asp83, His147, Asp166, and His227. Residues 254–393 (ITIFYDTMSN…LCREHGREIA (140 aa)) enclose the Flavodoxin-like domain. Residues 260-264 (TMSNN) and 342-369 (AFGSHGWSGGAVDRLSTRLQDAGFEMSL) each bind FMN. The region spanning 423 to 474 (GPRMQCSVCQWIYDPAKGEPMQDVAPGTPWSEVPDNFLCPECSLGKDVFDEL) is the Rubredoxin-like domain. Residues Cys428, Cys431, Cys461, and Cys464 each coordinate Fe cation.

The protein in the N-terminal section; belongs to the zinc metallo-hydrolase group 3 family. In terms of assembly, homotetramer. It depends on Fe cation as a cofactor. FMN serves as cofactor.

It localises to the cytoplasm. It functions in the pathway nitrogen metabolism; nitric oxide reduction. In terms of biological role, anaerobic nitric oxide reductase; uses NADH to detoxify nitric oxide (NO), protecting several 4Fe-4S NO-sensitive enzymes. Has at least 2 reductase partners, only one of which (NorW, flavorubredoxin reductase) has been identified. NO probably binds to the di-iron center; electrons enter from the NorW at rubredoxin and are transferred sequentially to the FMN center and the di-iron center. Also able to function as an aerobic oxygen reductase. The polypeptide is Anaerobic nitric oxide reductase flavorubredoxin (Escherichia coli (strain SMS-3-5 / SECEC)).